A 483-amino-acid chain; its full sequence is Probable glycine dehydrogenase (decarboxylating) subunit 2 (483 aa).

The tract at residues 1–33 is disordered; that stretch reads MLIFEHSRKNRRNYSQAPATRPAKNNIPDHLKR. K264 carries the N6-(pyridoxal phosphate)lysine modification.

This sequence belongs to the GcvP family. C-terminal subunit subfamily. As to quaternary structure, the glycine cleavage system is composed of four proteins: P, T, L and H. In this organism, the P 'protein' is a heterodimer of two subunits. Requires pyridoxal 5'-phosphate as cofactor.

The catalysed reaction is N(6)-[(R)-lipoyl]-L-lysyl-[glycine-cleavage complex H protein] + glycine + H(+) = N(6)-[(R)-S(8)-aminomethyldihydrolipoyl]-L-lysyl-[glycine-cleavage complex H protein] + CO2. The glycine cleavage system catalyzes the degradation of glycine. The P protein binds the alpha-amino group of glycine through its pyridoxal phosphate cofactor; CO(2) is released and the remaining methylamine moiety is then transferred to the lipoamide cofactor of the H protein. This Nitrosomonas europaea (strain ATCC 19718 / CIP 103999 / KCTC 2705 / NBRC 14298) protein is Probable glycine dehydrogenase (decarboxylating) subunit 2.